The chain runs to 608 residues: DNA mismatch repair protein MutL (608 aa).

It belongs to the DNA mismatch repair MutL/HexB family.

This protein is involved in the repair of mismatches in DNA. It is required for dam-dependent methyl-directed DNA mismatch repair. May act as a 'molecular matchmaker', a protein that promotes the formation of a stable complex between two or more DNA-binding proteins in an ATP-dependent manner without itself being part of a final effector complex. This Elusimicrobium minutum (strain Pei191) protein is DNA mismatch repair protein MutL.